The chain runs to 291 residues: Tetrahydromethanopterin:alpha-L-glutamate ligase (291 aa).

Positions 101-286 (SVFLELNNLP…IADKLLEKII (186 aa)) constitute an ATP-grasp domain. ATP contacts are provided by residues Lys136, 175-187 (QEFIKPVRNEHRD), and Arg203. The Mg(2+) site is built by Asp247, Glu259, and Asn261. Mn(2+) is bound by residues Asp247, Glu259, and Asn261.

This sequence belongs to the RimK family. MptN subfamily. Homodimer. Mg(2+) is required as a cofactor. It depends on Mn(2+) as a cofactor.

It carries out the reaction 5,6,7,8-tetrahydromethanopterin + L-glutamate + ATP = 5,6,7,8-tetrahydrosarcinapterin + ADP + phosphate + H(+). The protein operates within cofactor biosynthesis; 5,6,7,8-tetrahydrosarcinapterin biosynthesis. Its function is as follows. Catalyzes the ATP or GTP-dependent addition of one L-glutamate molecule to tetrahydromethanopterin, producing tetrahydrosarcinapterin. The sequence is that of Tetrahydromethanopterin:alpha-L-glutamate ligase (mptN) from Methanocaldococcus jannaschii (strain ATCC 43067 / DSM 2661 / JAL-1 / JCM 10045 / NBRC 100440) (Methanococcus jannaschii).